The chain runs to 115 residues: Ribonuclease P protein component (115 aa).

The protein belongs to the RnpA family. In terms of assembly, consists of a catalytic RNA component (M1 or rnpB) and a protein subunit.

It carries out the reaction Endonucleolytic cleavage of RNA, removing 5'-extranucleotides from tRNA precursor.. In terms of biological role, RNaseP catalyzes the removal of the 5'-leader sequence from pre-tRNA to produce the mature 5'-terminus. It can also cleave other RNA substrates such as 4.5S RNA. The protein component plays an auxiliary but essential role in vivo by binding to the 5'-leader sequence and broadening the substrate specificity of the ribozyme. In Buchnera aphidicola subsp. Acyrthosiphon pisum (strain APS) (Acyrthosiphon pisum symbiotic bacterium), this protein is Ribonuclease P protein component.